The sequence spans 496 residues: Glycerol kinase (496 aa).

An ADP-binding site is contributed by Thr-12. ATP is bound by residues Thr-12, Thr-13, and Ser-14. Thr-12 contributes to the sn-glycerol 3-phosphate binding site. Position 16 (Arg-16) interacts with ADP. Sn-glycerol 3-phosphate is bound by residues Arg-82, Glu-83, and Tyr-134. 3 residues coordinate glycerol: Arg-82, Glu-83, and Tyr-134. His-230 is modified (phosphohistidine; by HPr). Asp-244 contacts sn-glycerol 3-phosphate. Positions 244 and 245 each coordinate glycerol. Positions 266 and 309 each coordinate ADP. Thr-266, Gly-309, Gln-313, and Gly-410 together coordinate ATP. Residues Gly-410 and Asn-414 each contribute to the ADP site.

It belongs to the FGGY kinase family. In terms of assembly, homotetramer and homodimer (in equilibrium). Post-translationally, the phosphoenolpyruvate-dependent sugar phosphotransferase system (PTS), including enzyme I, and histidine-containing protein (HPr) are required for the phosphorylation, which leads to the activation of the enzyme.

The enzyme catalyses glycerol + ATP = sn-glycerol 3-phosphate + ADP + H(+). Its pathway is polyol metabolism; glycerol degradation via glycerol kinase pathway; sn-glycerol 3-phosphate from glycerol: step 1/1. Its activity is regulated as follows. Activated by phosphorylation and inhibited by fructose 1,6-bisphosphate (FBP). In terms of biological role, key enzyme in the regulation of glycerol uptake and metabolism. Catalyzes the phosphorylation of glycerol to yield sn-glycerol 3-phosphate. The polypeptide is Glycerol kinase (Bacillus velezensis (strain DSM 23117 / BGSC 10A6 / LMG 26770 / FZB42) (Bacillus amyloliquefaciens subsp. plantarum)).